Reading from the N-terminus, the 108-residue chain is Ribulose bisphosphate carboxylase small subunit (108 aa).

The protein belongs to the RuBisCO small chain family. As to quaternary structure, heterohexadecamer of 8 large and 8 small subunits.

Functionally, ruBisCO catalyzes two reactions: the carboxylation of D-ribulose 1,5-bisphosphate, the primary event in carbon dioxide fixation, as well as the oxidative fragmentation of the pentose substrate. Both reactions occur simultaneously and in competition at the same active site. Although the small subunit is not catalytic it is essential for maximal activity. In Nitrobacter vulgaris, this protein is Ribulose bisphosphate carboxylase small subunit.